The sequence spans 169 residues: ATP synthase subunit b, sodium ion specific (169 aa).

The helical transmembrane segment at 5-27 (SFISLDWGVVFQIVNTIVMYLIL) threads the bilayer.

Belongs to the ATPase B chain family. As to quaternary structure, F-type ATPases have 2 components, F(1) - the catalytic core - and F(0) - the membrane proton channel. F(1) has five subunits: alpha(3), beta(3), gamma(1), delta(1), epsilon(1). F(0) has three main subunits: a(1), b(2) and c(10-14). The alpha and beta chains form an alternating ring which encloses part of the gamma chain. F(1) is attached to F(0) by a central stalk formed by the gamma and epsilon chains, while a peripheral stalk is formed by the delta and b chains.

Its subcellular location is the cell membrane. Its function is as follows. F(1)F(0) ATP synthase produces ATP from ADP in the presence of a proton or sodium gradient. F-type ATPases consist of two structural domains, F(1) containing the extramembraneous catalytic core and F(0) containing the membrane proton channel, linked together by a central stalk and a peripheral stalk. During catalysis, ATP synthesis in the catalytic domain of F(1) is coupled via a rotary mechanism of the central stalk subunits to proton translocation. Component of the F(0) channel, it forms part of the peripheral stalk, linking F(1) to F(0). In terms of biological role, in this organism this enzyme may function as an ATP-driven Na(+) ion pump to generate a Na(+) ion electrochemical gradient rather than as an ATP synthase. This is ATP synthase subunit b, sodium ion specific (atpF) from Clostridium paradoxum.